Reading from the N-terminus, the 223-residue chain is Proteasome subunit beta (223 aa).

A propeptide spans 1-6 (MDTMKG) (removed in mature form; by autocatalysis). Thr-7 functions as the Nucleophile in the catalytic mechanism.

Belongs to the peptidase T1B family. As to quaternary structure, the 20S proteasome core is composed of 14 alpha and 14 beta subunits that assemble into four stacked heptameric rings, resulting in a barrel-shaped structure. The two inner rings, each composed of seven catalytic beta subunits, are sandwiched by two outer rings, each composed of seven alpha subunits. The catalytic chamber with the active sites is on the inside of the barrel. Has a gated structure, the ends of the cylinder being occluded by the N-termini of the alpha-subunits. Is capped at one or both ends by the proteasome regulatory ATPase, PAN.

The protein localises to the cytoplasm. It carries out the reaction Cleavage of peptide bonds with very broad specificity.. Its activity is regulated as follows. The formation of the proteasomal ATPase PAN-20S proteasome complex, via the docking of the C-termini of PAN into the intersubunit pockets in the alpha-rings, triggers opening of the gate for substrate entry. Interconversion between the open-gate and close-gate conformations leads to a dynamic regulation of the 20S proteasome proteolysis activity. Functionally, component of the proteasome core, a large protease complex with broad specificity involved in protein degradation. This chain is Proteasome subunit beta, found in Methanocaldococcus vulcanius (strain ATCC 700851 / DSM 12094 / M7) (Methanococcus vulcanius).